The sequence spans 489 residues: Nuclear distribution protein PAC1 (489 aa).

The stretch at serine 66–glycine 98 forms a coiled coil. WD repeat units follow at residues glutamine 119 to proline 158, alanine 164 to asparagine 205, glycine 206 to serine 246, glycine 249 to methionine 291, isoleucine 328 to histidine 368, glycine 389 to serine 428, and glycine 437 to lysine 486.

It belongs to the WD repeat LIS1/nudF family. As to quaternary structure, self-associates. Interacts with NDL1 and dynein.

It localises to the cytoplasm. Its subcellular location is the cytoskeleton. The protein resides in the spindle pole. Functionally, positively regulates the activity of the minus-end directed microtubule motor protein dynein. Plays a central role in positioning the mitotic spindle at the bud neck during cell division. Targets cytoplasmic dynein to microtubule plus ends, thereby promoting dynein-mediated microtubule sliding along the bud cortex and consequently the movement of the mitotic spindle to the bud neck. This is Nuclear distribution protein PAC1 from Candida dubliniensis (strain CD36 / ATCC MYA-646 / CBS 7987 / NCPF 3949 / NRRL Y-17841) (Yeast).